The sequence spans 1009 residues: Regulator of telomere elongation helicase 1 homolog (1009 aa).

The region spanning 7–322 (AGIPVHFPFE…KEMLLELEKA (316 aa)) is the Helicase ATP-binding domain. Position 42–49 (42–49 (SPTGTGKT)) interacts with ATP. Positions 146, 164, 173, and 209 each coordinate [4Fe-4S] cluster. Residues 252–255 (DEAH) carry the DEAH box motif.

Belongs to the helicase family. RAD3/XPD subfamily.

It is found in the nucleus. The catalysed reaction is ATP + H2O = ADP + phosphate + H(+). A probable ATP-dependent DNA helicase implicated in DNA repair and the maintenance of genomic stability. Acts as an anti-recombinase to counteract toxic recombination and limit crossover during meiosis. Regulates meiotic recombination and crossover homeostasis by physically dissociating strand invasion events and thereby promotes noncrossover repair by meiotic synthesis dependent strand annealing (SDSA) as well as disassembly of D loop recombination intermediates. This chain is Regulator of telomere elongation helicase 1 homolog, found in Drosophila persimilis (Fruit fly).